The chain runs to 351 residues: Phosphate acyltransferase (351 aa).

This sequence belongs to the PlsX family. As to quaternary structure, homodimer. Probably interacts with PlsY.

It is found in the cytoplasm. It carries out the reaction a fatty acyl-[ACP] + phosphate = an acyl phosphate + holo-[ACP]. Its pathway is lipid metabolism; phospholipid metabolism. Catalyzes the reversible formation of acyl-phosphate (acyl-PO(4)) from acyl-[acyl-carrier-protein] (acyl-ACP). This enzyme utilizes acyl-ACP as fatty acyl donor, but not acyl-CoA. This is Phosphate acyltransferase from Paramagnetospirillum magneticum (strain ATCC 700264 / AMB-1) (Magnetospirillum magneticum).